Here is a 114-residue protein sequence, read N- to C-terminus: UPF0102 protein HPAG1_0809 (114 aa).

It belongs to the UPF0102 family.

This chain is UPF0102 protein HPAG1_0809, found in Helicobacter pylori (strain HPAG1).